The following is a 401-amino-acid chain: Riboflavin biosynthesis protein RibBA (401 aa).

The tract at residues 1-203 (MTDFQFSKVE…IQQLQEYRRK (203 aa)) is DHBP synthase. D-ribulose 5-phosphate contacts are provided by residues 30 to 31 (RE), D35, 142 to 146 (RNGHT), and E166. A Mg(2+)-binding site is contributed by E31. Residue H145 coordinates Mg(2+). The interval 204–401 (HDSLVKQISV…QIKMGHMFNF (198 aa)) is GTP cyclohydrolase II. 254 to 258 (RIHSE) contributes to the GTP binding site. Zn(2+)-binding residues include C259, C270, and C272. GTP contacts are provided by residues Q275, 297-299 (EGR), and T319. D331 acts as the Proton acceptor; for GTP cyclohydrolase activity in catalysis. R333 acts as the Nucleophile; for GTP cyclohydrolase activity in catalysis. GTP is bound by residues T354 and K359.

It in the N-terminal section; belongs to the DHBP synthase family. The protein in the C-terminal section; belongs to the GTP cyclohydrolase II family. Mg(2+) is required as a cofactor. The cofactor is Mn(2+). Requires Zn(2+) as cofactor.

It carries out the reaction D-ribulose 5-phosphate = (2S)-2-hydroxy-3-oxobutyl phosphate + formate + H(+). The enzyme catalyses GTP + 4 H2O = 2,5-diamino-6-hydroxy-4-(5-phosphoribosylamino)-pyrimidine + formate + 2 phosphate + 3 H(+). Its pathway is cofactor biosynthesis; riboflavin biosynthesis; 2-hydroxy-3-oxobutyl phosphate from D-ribulose 5-phosphate: step 1/1. The protein operates within cofactor biosynthesis; riboflavin biosynthesis; 5-amino-6-(D-ribitylamino)uracil from GTP: step 1/4. Its function is as follows. Catalyzes the conversion of D-ribulose 5-phosphate to formate and 3,4-dihydroxy-2-butanone 4-phosphate. Catalyzes the conversion of GTP to 2,5-diamino-6-ribosylamino-4(3H)-pyrimidinone 5'-phosphate (DARP), formate and pyrophosphate. The sequence is that of Riboflavin biosynthesis protein RibBA from Actinobacillus pleuropneumoniae serotype 7 (strain AP76).